The sequence spans 587 residues: MAAPTTEHAETIVPALCRRFGGETFVQQTTADGISTLWLPARILVETIRYLRSEIDRPYALLFDLTAVDERVRKHRDGMPASAYTVVYHLVSLERNADVRLKIALPETDPALPSIVAVCPAANWYEREVWDMFGIRFDGHPNLRRLIMPPTWQGHPLRKDHPARATEMEPFSLPDDVQQQEQEALRFVPEEWGMQRQSEDTDFLFLNLGPNHPSVHGVFRVALQLDGEEIVDAVPDIGYHHRGAEKMGERQSWHSYIPYTDRIDYLGGSMNNLPYVMAVEKLAGIEVPERARVIRVMISEFYRIASHLLFYGTFAQDVGQMSPIFYMFIDRERVFEIIESFTGARMHSSFFRIGGVAMDLPEGWDRLIREFIAYFPRRLAEYDKAVMANKLIQRRTRGIGAYTTTEAIDWSVTGAGLRATGLPWDYRKARPYSGYENFEFDVPTGTNGDCYDRCAVRVEEMRQSLRIIEQCVEHMPSGPYKAEHPLTTPPPKERTMHDIETLIQHFLSVSWGPVIPPGEVCVTIEATKGLNGYYLTSDGGTMSYRTRIRTPSFPHLQMIPLMSRGMMVADLIAILASIDFVMADVDR.

Residues 1-178 form an NADH dehydrogenase I subunit C region; that stretch reads MAAPTTEHAE…EPFSLPDDVQ (178 aa). Positions 202–587 are NADH dehydrogenase I subunit D; it reads DFLFLNLGPN…IDFVMADVDR (386 aa).

It in the N-terminal section; belongs to the complex I 30 kDa subunit family. This sequence in the C-terminal section; belongs to the complex I 49 kDa subunit family. As to quaternary structure, NDH-1 is composed of 13 different subunits. Subunits NuoB, CD, E, F, and G constitute the peripheral sector of the complex.

The protein localises to the cell inner membrane. It catalyses the reaction a quinone + NADH + 5 H(+)(in) = a quinol + NAD(+) + 4 H(+)(out). Functionally, NDH-1 shuttles electrons from NADH, via FMN and iron-sulfur (Fe-S) centers, to quinones in the respiratory chain. The immediate electron acceptor for the enzyme in this species is believed to be ubiquinone. Couples the redox reaction to proton translocation (for every two electrons transferred, four hydrogen ions are translocated across the cytoplasmic membrane), and thus conserves the redox energy in a proton gradient. The polypeptide is NADH-quinone oxidoreductase subunit C/D (Methylococcus capsulatus (strain ATCC 33009 / NCIMB 11132 / Bath)).